A 456-amino-acid polypeptide reads, in one-letter code: Exodeoxyribonuclease 7 large subunit (456 aa).

Belongs to the XseA family. As to quaternary structure, heterooligomer composed of large and small subunits.

It is found in the cytoplasm. The catalysed reaction is Exonucleolytic cleavage in either 5'- to 3'- or 3'- to 5'-direction to yield nucleoside 5'-phosphates.. Its function is as follows. Bidirectionally degrades single-stranded DNA into large acid-insoluble oligonucleotides, which are then degraded further into small acid-soluble oligonucleotides. This chain is Exodeoxyribonuclease 7 large subunit, found in Lactobacillus delbrueckii subsp. bulgaricus (strain ATCC BAA-365 / Lb-18).